The primary structure comprises 346 residues: Phosphoribosylformylglycinamidine cyclo-ligase (346 aa).

Belongs to the AIR synthase family.

The protein localises to the cytoplasm. It catalyses the reaction 2-formamido-N(1)-(5-O-phospho-beta-D-ribosyl)acetamidine + ATP = 5-amino-1-(5-phospho-beta-D-ribosyl)imidazole + ADP + phosphate + H(+). It participates in purine metabolism; IMP biosynthesis via de novo pathway; 5-amino-1-(5-phospho-D-ribosyl)imidazole from N(2)-formyl-N(1)-(5-phospho-D-ribosyl)glycinamide: step 2/2. The chain is Phosphoribosylformylglycinamidine cyclo-ligase from Bacillus anthracis (strain A0248).